The chain runs to 380 residues: Probable inactive reductase easA (380 aa).

FMN is bound by residues 25–27, A60, Q102, and H171; that span reads PMT. Substrate contacts are provided by H171 and N174. FMN contacts are provided by residues K223, G299, 324-325, and R325; that span reads GR. Y352 is a binding site for substrate.

Belongs to the NADH:flavin oxidoreductase/NADH oxidase family.

Probable inactive dehydrogenase; part of the gene cluster that mediates the biosynthesis of fungal ergot alkaloid ergovaline, the predominant ergopeptine product in E.festucae var. lolii. DmaW catalyzes the first step of ergot alkaloid biosynthesis by condensing dimethylallyl diphosphate (DMAP) and tryptophan to form 4-dimethylallyl-L-tryptophan. The second step is catalyzed by the methyltransferase easF that methylates 4-dimethylallyl-L-tryptophan in the presence of S-adenosyl-L-methionine, resulting in the formation of 4-dimethylallyl-L-abrine. The catalase easC and the FAD-dependent oxidoreductase easE then transform 4-dimethylallyl-L-abrine to chanoclavine-I which is further oxidized by easD in the presence of NAD(+), resulting in the formation of chanoclavine-I aldehyde. Agroclavine dehydrogenase easG then mediates the conversion of chanoclavine-I aldehyde to agroclavine via a non-enzymatic adduct reaction: the substrate is an iminium intermediate that is formed spontaneously from chanoclavine-I aldehyde in the presence of glutathione. The presence of easA is not required to complete this reaction. Further conversion of agroclavine to paspalic acid is a two-step process involving oxidation of agroclavine to elymoclavine and of elymoclavine to paspalic acid, the second step being performed by the elymoclavine oxidase cloA. Paspalic acid is then further converted to D-lysergic acid. Ergovaline is assembled from D-lysergic acid and three different amino acids by the D-lysergyl-peptide-synthetase composed of a monomudular (lpsB) and a trimodular (lpsA) nonribosomal peptide synthetase subunit. This is Probable inactive reductase easA from Epichloe festucae var. lolii (Neotyphodium lolii).